Reading from the N-terminus, the 630-residue chain is CREB-regulated transcription coactivator 1 (630 aa).

Ser-64 and Ser-113 each carry phosphoserine. 4 disordered regions span residues Ala-142–Asp-174, Gly-187–Ile-221, Ser-256–Leu-331, and Gln-356–Thr-475. Residue Thr-149 is modified to Phosphothreonine. Position 151 is a phosphoserine; by SIK1 and SIK2 (Ser-151). Residues Ser-151–Ser-167 are compositionally biased toward polar residues. Position 161 is a phosphothreonine (Thr-161). Basic and acidic residues predominate over residues Glu-194–Lys-208. Positions Thr-242–Leu-258 match the Nuclear export signal motif. The span at Ser-256–Pro-270 shows a compositional bias: pro residues. Composition is skewed to polar residues over residues Gly-292–Gln-301 and Leu-310–Leu-331. Positions Gln-361–Gln-384 are enriched in pro residues. The segment covering Val-385–Pro-394 has biased composition (low complexity). Composition is skewed to polar residues over residues Val-414–Pro-426 and Pro-450–Thr-475.

This sequence belongs to the TORC family. As to quaternary structure, binds, as a tetramer, through its N-terminal region, with the bZIP domain of CREB1. 'Arg-314' in the bZIP domain of CREB1 is essential for this interaction. Interaction, via its C-terminal, with TAF4, enhances recruitment of TAF4 to CREB1. Interacts with 14-3-3 proteins, including YWHAE/14-3-3 epsilon. Interacts with calmodulin-dependent catalytic subunit PPP3CA/calcineurin A. Post-translationally, phosphorylation/dephosphorylation states of Ser-151 are required for regulating transduction of CREB activity. TORCs are inactive when phosphorylated, and active when dephosphorylated at this site. This primary site of phosphorylation is mediated by SIKs (SIK1 and SIK2), is regulated by cAMP and calcium levels and is dependent on the phosphorylation of SIKs by LKB1. As to expression, highly expressed in developing cortical neurons, peaking during dendrite development.

The protein resides in the cytoplasm. It is found in the nucleus. In terms of biological role, transcriptional coactivator for CREB1 which activates transcription through both consensus and variant cAMP response element (CRE) sites. Acts as a coactivator, in the SIK/TORC signaling pathway, being active when dephosphorylated and acts independently of CREB1 'Ser-133' phosphorylation. Enhances the interaction of CREB1 with TAF4. Regulates the expression of specific CREB-activated genes such as the steroidogenic gene, StAR. Potent coactivator of PGC1alpha and inducer of mitochondrial biogenesis in muscle cells. In the hippocampus, involved in late-phase long-term potentiation (L-LTP) maintenance at the Schaffer collateral-CA1 synapses. May be required for dendritic growth of developing cortical neurons. In concert with SIK1, regulates the light-induced entrainment of the circadian clock. In response to light stimulus, coactivates the CREB-mediated transcription of PER1 which plays an important role in the photic entrainment of the circadian clock. The sequence is that of CREB-regulated transcription coactivator 1 (Crtc1) from Rattus norvegicus (Rat).